A 305-amino-acid chain; its full sequence is Tyrosine recombinase XerC (305 aa).

Residues 4–95 (TSIQALINKW…AVKNFYRFLE (92 aa)) enclose the Core-binding (CB) domain. Positions 116 to 298 (LLPKALSEDD…SIKHLEAVYT (183 aa)) constitute a Tyr recombinase domain. Residues arginine 159, lysine 182, histidine 250, arginine 253, and histidine 276 contribute to the active site. The active-site O-(3'-phospho-DNA)-tyrosine intermediate is the tyrosine 285.

The protein belongs to the 'phage' integrase family. XerC subfamily. Forms a cyclic heterotetrameric complex composed of two molecules of XerC and two molecules of XerD.

The protein resides in the cytoplasm. Its function is as follows. Site-specific tyrosine recombinase, which acts by catalyzing the cutting and rejoining of the recombining DNA molecules. The XerC-XerD complex is essential to convert dimers of the bacterial chromosome into monomers to permit their segregation at cell division. It also contributes to the segregational stability of plasmids. This chain is Tyrosine recombinase XerC, found in Rickettsia conorii (strain ATCC VR-613 / Malish 7).